Reading from the N-terminus, the 867-residue chain is DNA mismatch repair protein MutS (867 aa).

An ATP-binding site is contributed by 606-613 (GPNMSGKS).

The protein belongs to the DNA mismatch repair MutS family.

Its function is as follows. This protein is involved in the repair of mismatches in DNA. It is possible that it carries out the mismatch recognition step. This protein has a weak ATPase activity. The protein is DNA mismatch repair protein MutS of Oceanobacillus iheyensis (strain DSM 14371 / CIP 107618 / JCM 11309 / KCTC 3954 / HTE831).